The chain runs to 221 residues: Iron-sulfur cluster repair protein YtfE (221 aa).

This sequence belongs to the RIC family. YtfE subfamily. Homodimer.

It localises to the cytoplasm. Functionally, di-iron-containing protein involved in the repair of iron-sulfur clusters damaged by oxidative and nitrosative stress conditions. In Yersinia pseudotuberculosis serotype O:1b (strain IP 31758), this protein is Iron-sulfur cluster repair protein YtfE.